The following is a 157-amino-acid chain: MRIGQGYDIHRLVEGRPLILGGIRIPYEKGLLGHSDADVLTHAIMDALLGAAALRDIGYYFPPEDERWKGADSILLLQQVVQLVGQEGWRIANVDSVVVAEQPKLKPHIPAIQARLAEAMQLSPKQVGVKATTNEKLGPVGQGEAMAAFAVVLLLER.

A divalent metal cation contacts are provided by Asp-8 and His-10. 4-CDP-2-C-methyl-D-erythritol 2-phosphate-binding positions include 8 to 10 and 34 to 35; these read DIH and HS. His-42 is an a divalent metal cation binding site. Residues 56–58 and 132–135 each bind 4-CDP-2-C-methyl-D-erythritol 2-phosphate; these read DIG and TTNE.

This sequence belongs to the IspF family. Homotrimer. A divalent metal cation serves as cofactor.

The catalysed reaction is 4-CDP-2-C-methyl-D-erythritol 2-phosphate = 2-C-methyl-D-erythritol 2,4-cyclic diphosphate + CMP. It functions in the pathway isoprenoid biosynthesis; isopentenyl diphosphate biosynthesis via DXP pathway; isopentenyl diphosphate from 1-deoxy-D-xylulose 5-phosphate: step 4/6. Its function is as follows. Involved in the biosynthesis of isopentenyl diphosphate (IPP) and dimethylallyl diphosphate (DMAPP), two major building blocks of isoprenoid compounds. Catalyzes the conversion of 4-diphosphocytidyl-2-C-methyl-D-erythritol 2-phosphate (CDP-ME2P) to 2-C-methyl-D-erythritol 2,4-cyclodiphosphate (ME-CPP) with a corresponding release of cytidine 5-monophosphate (CMP). The polypeptide is 2-C-methyl-D-erythritol 2,4-cyclodiphosphate synthase (Synechococcus sp. (strain JA-3-3Ab) (Cyanobacteria bacterium Yellowstone A-Prime)).